A 388-amino-acid chain; its full sequence is Translation initiation factor eIF2B subunit beta (388 aa).

Positions 109-133 (DDFETTTSNNNNNNNNNNINSSSNI) are disordered. Residues 116–133 (SNNNNNNNNNNINSSSNI) show a composition bias toward low complexity.

It belongs to the eIF-2B alpha/beta/delta subunits family. As to quaternary structure, component of the translation initiation factor 2B (eIF2B) complex which is a heterodecamer of two sets of five different subunits: alpha, beta, gamma, delta and epsilon. Subunits alpha, beta and delta comprise a regulatory subcomplex and subunits epsilon and gamma comprise a catalytic subcomplex. Within the complex, the hexameric regulatory complex resides at the center, with the two heterodimeric catalytic subcomplexes bound on opposite sides.

The protein resides in the cytoplasm. The protein localises to the cytosol. Acts as a component of the translation initiation factor 2B (eIF2B) complex, which catalyzes the exchange of GDP for GTP on eukaryotic initiation factor 2 (eIF2) gamma subunit. Its guanine nucleotide exchange factor activity is repressed when bound to eIF2 complex phosphorylated on the alpha subunit, thereby limiting the amount of methionyl-initiator methionine tRNA available to the ribosome and consequently global translation is repressed. The sequence is that of Translation initiation factor eIF2B subunit beta (eif2b2) from Dictyostelium discoideum (Social amoeba).